The chain runs to 286 residues: Thymidylate synthase (286 aa).

R21 is a binding site for dUMP. A (6R)-5,10-methylene-5,6,7,8-tetrahydrofolate-binding site is contributed by N51. 150–151 (RR) lines the dUMP pocket. C170 functions as the Nucleophile in the catalytic mechanism. DUMP-binding positions include 190–193 (RSAD), N201, and 231–233 (HIY). Residue D193 participates in (6R)-5,10-methylene-5,6,7,8-tetrahydrofolate binding. A285 serves as a coordination point for (6R)-5,10-methylene-5,6,7,8-tetrahydrofolate.

It belongs to the thymidylate synthase family. Bacterial-type ThyA subfamily. Homodimer.

The protein resides in the cytoplasm. It carries out the reaction dUMP + (6R)-5,10-methylene-5,6,7,8-tetrahydrofolate = 7,8-dihydrofolate + dTMP. The protein operates within pyrimidine metabolism; dTTP biosynthesis. In terms of biological role, catalyzes the reductive methylation of 2'-deoxyuridine-5'-monophosphate (dUMP) to 2'-deoxythymidine-5'-monophosphate (dTMP) while utilizing 5,10-methylenetetrahydrofolate (mTHF) as the methyl donor and reductant in the reaction, yielding dihydrofolate (DHF) as a by-product. This enzymatic reaction provides an intracellular de novo source of dTMP, an essential precursor for DNA biosynthesis. The polypeptide is Thymidylate synthase (Mycoplasmopsis pulmonis (strain UAB CTIP) (Mycoplasma pulmonis)).